We begin with the raw amino-acid sequence, 89 residues long: Small ribosomal subunit protein uS17A (89 aa).

This sequence belongs to the universal ribosomal protein uS17 family. In terms of assembly, part of the 30S ribosomal subunit.

Its function is as follows. One of the primary rRNA binding proteins, it binds specifically to the 5'-end of 16S ribosomal RNA. The chain is Small ribosomal subunit protein uS17A from Bacteroides thetaiotaomicron (strain ATCC 29148 / DSM 2079 / JCM 5827 / CCUG 10774 / NCTC 10582 / VPI-5482 / E50).